We begin with the raw amino-acid sequence, 126 residues long: Holo-[acyl-carrier-protein] synthase (126 aa).

Residues Asp9 and Glu58 each contribute to the Mg(2+) site.

It belongs to the P-Pant transferase superfamily. AcpS family. The cofactor is Mg(2+).

Its subcellular location is the cytoplasm. The enzyme catalyses apo-[ACP] + CoA = holo-[ACP] + adenosine 3',5'-bisphosphate + H(+). In terms of biological role, transfers the 4'-phosphopantetheine moiety from coenzyme A to a Ser of acyl-carrier-protein. In Enterobacter sp. (strain 638), this protein is Holo-[acyl-carrier-protein] synthase.